Here is a 468-residue protein sequence, read N- to C-terminus: A-type ATP synthase subunit B (468 aa).

Belongs to the ATPase alpha/beta chains family. In terms of assembly, has multiple subunits with at least A(3), B(3), C, D, E, F, H, I and proteolipid K(x).

Its subcellular location is the cell membrane. In terms of biological role, component of the A-type ATP synthase that produces ATP from ADP in the presence of a proton gradient across the membrane. The B chain is a regulatory subunit. This chain is A-type ATP synthase subunit B, found in Haloferax volcanii (strain ATCC 29605 / DSM 3757 / JCM 8879 / NBRC 14742 / NCIMB 2012 / VKM B-1768 / DS2) (Halobacterium volcanii).